Consider the following 346-residue polypeptide: MAEITAKLVKELREKSGAGVMDAKKALVETDGDMDKAIELLREKGMAKAAKKADRVAAEGLTGVYVSGNYAAVVEVNAETDFVAKNAQFVELVNDTAKTIAEGKPANNEEALNLIMPSGETLAAAYVNATATIGEKISFRRFSLLEKTDEQHFGAYQHNGGRIGVISVIEGGDDALAKQVSMHIAAMKPTVLSYTELDPQFVKDELAKLNHNIELDNESRAMVDKAPLPFLQYGSKAQLSEDVIAKAEEDIKAELAAEGKPEKIWDKIIPGKMDRFMLDNTKVDQAYTLLAQVYIMDDSKTVEAYLDSVNAKAIAFARFEVGEGIEKKANDFESEVAATMAAALNN.

The tract at residues 80–83 is involved in Mg(2+) ion dislocation from EF-Tu; that stretch reads TDFV.

It belongs to the EF-Ts family.

The protein localises to the cytoplasm. In terms of biological role, associates with the EF-Tu.GDP complex and induces the exchange of GDP to GTP. It remains bound to the aminoacyl-tRNA.EF-Tu.GTP complex up to the GTP hydrolysis stage on the ribosome. The polypeptide is Elongation factor Ts (Streptococcus uberis (strain ATCC BAA-854 / 0140J)).